The primary structure comprises 221 residues: Thiamine-phosphate synthase (221 aa).

Residues 44-48 (QFREK) and asparagine 79 contribute to the 4-amino-2-methyl-5-(diphosphooxymethyl)pyrimidine site. Mg(2+) contacts are provided by aspartate 80 and aspartate 99. Serine 117 serves as a coordination point for 4-amino-2-methyl-5-(diphosphooxymethyl)pyrimidine. Position 143 to 145 (143 to 145 (TSS)) interacts with 2-[(2R,5Z)-2-carboxy-4-methylthiazol-5(2H)-ylidene]ethyl phosphate. 4-amino-2-methyl-5-(diphosphooxymethyl)pyrimidine is bound at residue lysine 146. 2-[(2R,5Z)-2-carboxy-4-methylthiazol-5(2H)-ylidene]ethyl phosphate is bound by residues glycine 175 and 195 to 196 (IS).

Belongs to the thiamine-phosphate synthase family. It depends on Mg(2+) as a cofactor.

It catalyses the reaction 2-[(2R,5Z)-2-carboxy-4-methylthiazol-5(2H)-ylidene]ethyl phosphate + 4-amino-2-methyl-5-(diphosphooxymethyl)pyrimidine + 2 H(+) = thiamine phosphate + CO2 + diphosphate. The enzyme catalyses 2-(2-carboxy-4-methylthiazol-5-yl)ethyl phosphate + 4-amino-2-methyl-5-(diphosphooxymethyl)pyrimidine + 2 H(+) = thiamine phosphate + CO2 + diphosphate. It carries out the reaction 4-methyl-5-(2-phosphooxyethyl)-thiazole + 4-amino-2-methyl-5-(diphosphooxymethyl)pyrimidine + H(+) = thiamine phosphate + diphosphate. It participates in cofactor biosynthesis; thiamine diphosphate biosynthesis; thiamine phosphate from 4-amino-2-methyl-5-diphosphomethylpyrimidine and 4-methyl-5-(2-phosphoethyl)-thiazole: step 1/1. Functionally, condenses 4-methyl-5-(beta-hydroxyethyl)thiazole monophosphate (THZ-P) and 2-methyl-4-amino-5-hydroxymethyl pyrimidine pyrophosphate (HMP-PP) to form thiamine monophosphate (TMP). This Geobacillus kaustophilus (strain HTA426) protein is Thiamine-phosphate synthase.